A 289-amino-acid polypeptide reads, in one-letter code: Phytoene synthase (289 aa).

Belongs to the phytoene/squalene synthase family. ATP is required as a cofactor. Mn(2+) serves as cofactor. Requires Mg(2+) as cofactor.

Its pathway is carotenoid biosynthesis; phytoene biosynthesis. Involved in the biosynthesis of carotenoids. Catalyzes the condensation of two molecules of geranylgeranyl diphosphate (GGPP) to give prephytoene diphosphate (PPPP) and the subsequent rearrangement of the cyclopropylcarbinyl intermediate to yield phytoene. The sequence is that of Phytoene synthase (crtB) from Thermus thermophilus (strain ATCC BAA-163 / DSM 7039 / HB27).